The primary structure comprises 318 residues: Carbamate kinase (318 aa).

This sequence belongs to the carbamate kinase family.

The protein resides in the cytoplasm. It carries out the reaction hydrogencarbonate + NH4(+) + ATP = carbamoyl phosphate + ADP + H2O + H(+). It functions in the pathway metabolic intermediate metabolism; carbamoyl phosphate degradation; CO(2) and NH(3) from carbamoyl phosphate: step 1/1. The protein is Carbamate kinase (arcC) of Lentilactobacillus hilgardii (Lactobacillus hilgardii).